Consider the following 153-residue polypeptide: SsrA-binding protein (153 aa).

The segment covering 132–142 (ALKRKEAEREA) has biased composition (basic and acidic residues). Positions 132–153 (ALKRKEAEREAQSAMKRYAKGY) are disordered.

Belongs to the SmpB family.

It localises to the cytoplasm. Its function is as follows. Required for rescue of stalled ribosomes mediated by trans-translation. Binds to transfer-messenger RNA (tmRNA), required for stable association of tmRNA with ribosomes. tmRNA and SmpB together mimic tRNA shape, replacing the anticodon stem-loop with SmpB. tmRNA is encoded by the ssrA gene; the 2 termini fold to resemble tRNA(Ala) and it encodes a 'tag peptide', a short internal open reading frame. During trans-translation Ala-aminoacylated tmRNA acts like a tRNA, entering the A-site of stalled ribosomes, displacing the stalled mRNA. The ribosome then switches to translate the ORF on the tmRNA; the nascent peptide is terminated with the 'tag peptide' encoded by the tmRNA and targeted for degradation. The ribosome is freed to recommence translation, which seems to be the essential function of trans-translation. The sequence is that of SsrA-binding protein from Campylobacter hominis (strain ATCC BAA-381 / DSM 21671 / CCUG 45161 / LMG 19568 / NCTC 13146 / CH001A).